We begin with the raw amino-acid sequence, 706 residues long: Gamma-adducin (706 aa).

The segment covering 1–11 (MSSDTSPAVVT) has biased composition (low complexity). The disordered stretch occupies residues 1 to 23 (MSSDTSPAVVTTPPPPSMPHKER). Ser-2 bears the N-acetylserine mark. 8 positions are modified to phosphoserine: Ser-31, Ser-42, Ser-64, Ser-402, Ser-414, Ser-423, Ser-442, and Ser-461. 4 disordered regions span residues 471–495 (AEDS…VPLN), 534–556 (PPST…PFSH), 574–610 (QGLD…RLEE), and 651–706 (TSTT…KVEA). A Glycyl lysine isopeptide (Lys-Gly) (interchain with G-Cter in SUMO2) cross-link involves residue Lys-484. Phosphoserine is present on residues Ser-583, Ser-585, and Ser-590. Low complexity-rich tracts occupy residues 590 to 605 (SVSQ…QSVP) and 651 to 662 (TSTTIENIEITI). Ser-673, Ser-677, Ser-679, Ser-681, and Ser-683 each carry phosphoserine. A compositionally biased stretch (basic residues) spans 682 to 706 (PSKKKKKFRTPSFLKKNKKKEKVEA). Residues 684 to 701 (KKKKKFRTPSFLKKNKKK) form an interaction with calmodulin region.

This sequence belongs to the aldolase class II family. Adducin subfamily. As to quaternary structure, heterodimer of an alpha and a gamma subunit. Post-translationally, sumoylated. In terms of processing, proteolytically cleaved by asparagine endopeptidase (AEP) into 2 fragments. Overexpression of the 1-357 fragment induces neuronal apoptosis, and overexpression of either 1-357 or 358-706 fragment increases the degeneration of dendritic spines. Overexpression of the 1-357 fragment impairs neurite outgrowth by downregulating the expression of Rac2, and induces synaptic dysfunction and cognitive impairments in tau P301S transgenic mice, a mouse model for Alzheimer disease (AD). As to expression, cleavage fragment 1-357 is expressed in the brain and the expression increases with age (at protein level). The fragment is expressed in the cortex, hippocampal CA1 region and hippocampal dentate gyrus in tau P301S transgenic mice, a mouse model for Alzheimer disease (AD) (at protein level). The fragment is only weakly expressed in non-transgenic mouse brain sections (at protein level).

The protein localises to the cytoplasm. It localises to the cytoskeleton. It is found in the cell membrane. Its function is as follows. Membrane-cytoskeleton-associated protein that promotes the assembly of the spectrin-actin network. Plays a role in actin filament capping. Binds to calmodulin. Involved in myogenic reactivity of the renal afferent arteriole (Af-art), renal interlobular arteries and middle cerebral artery (MCA) to increased perfusion pressure. Involved in regulation of potassium channels in the vascular smooth muscle cells (VSMCs) of the Af-art and MCA ex vivo. Involved in regulation of glomerular capillary pressure, glomerular filtration rate (GFR) and glomerular nephrin expression in response to hypertension. Involved in renal blood flow (RBF) autoregulation. Plays a role in podocyte structure and function. Regulates globular monomer actin (G-actin) and filamentous polymer actin (F-actin) ratios in the primary podocytes affecting actin cytoskeleton organization. Regulates expression of synaptopodin, RhoA, Rac1 and CDC42 in the renal cortex and the primary podocytes. Regulates expression of nephrin in the glomeruli and in the primary podocytes, expression of nephrin and podocinin in the renal cortex, and expression of focal adhesion proteins integrin alpha-3 and integrin beta-1 in the glomeruli. Involved in cell migration and cell adhesion of podocytes, and in podocyte foot process effacement. Regulates expression of profibrotics markers MMP2, MMP9, TGF beta-1, tubular tight junction protein E-cadherin, and mesenchymal markers vimentin and alpha-SMA. Promotes the growth of neurites. In Mus musculus (Mouse), this protein is Gamma-adducin (Add3).